The sequence spans 81 residues: uncharacterized protein (81 aa).

A signal peptide spans 1–22 (MNKKLSIIFLIFALIASVLCSA). The tract at residues 29–81 (HSSSTTTTTSSSGGTSGTDSSINTGSSYSGSGSGSGSTGGSGSGSGSGTAKWK) is disordered. The span at 30-58 (SSSTTTTTSSSGGTSGTDSSINTGSSYSG) shows a compositional bias: low complexity. Residues 59–75 (SGSGSGSTGGSGSGSGS) are compositionally biased toward gly residues.

Its subcellular location is the secreted. This is an uncharacterized protein from Dictyostelium discoideum (Social amoeba).